The primary structure comprises 193 residues: Phosphatidylglycerophosphatase and protein-tyrosine phosphatase 1 (193 aa).

A mitochondrion-targeting transit peptide spans 1–31 (MAASAWLEAGLARVLFYPTLLYTVFRGRVGG). The Tyrosine-protein phosphatase domain maps to 37–188 (WYHRIDHTVL…LKEFHKEIAA (152 aa)). At Lys85 the chain carries N6-succinyllysine. Catalysis depends on Cys132, which acts as the Phosphocysteine intermediate.

It belongs to the protein-tyrosine phosphatase family. Non-receptor class dual specificity subfamily. As to quaternary structure, interacts with STYXL1; the interaction inhibits PTPMT1 catalytic activity. Expressed in liver and in pancreatic beta cells.

It localises to the mitochondrion inner membrane. The catalysed reaction is O-phospho-L-tyrosyl-[protein] + H2O = L-tyrosyl-[protein] + phosphate. It catalyses the reaction O-phospho-L-seryl-[protein] + H2O = L-seryl-[protein] + phosphate. The enzyme catalyses O-phospho-L-threonyl-[protein] + H2O = L-threonyl-[protein] + phosphate. It carries out the reaction a 1,2-diacyl-sn-glycero-3-phospho-(1'-sn-glycero-3'-phosphate) + H2O = a 1,2-diacyl-sn-glycero-3-phospho-(1'-sn-glycerol) + phosphate. The catalysed reaction is 1,2-di-(9Z-octadecenoyl)-sn-glycero-3-phospho-(1'-sn-glycerol-3'-phosphate) + H2O = 1,2-di-(9Z-octadecenoyl)-sn-glycero-3-phospho-(1'-sn-glycerol) + phosphate. It catalyses the reaction 1,2-dioctanoyl-sn-glycero-3-phospho-(1D-myo-inositol-5-phosphate) + H2O = 1,2-dioctanoyl-sn-glycero-3-phospho-(1D-myo-inositol) + phosphate. The enzyme catalyses a 1-acyl-2-hexanoyl-sn-glycero-3-phospho-(1D-myo-inositol-5-phosphate) + H2O = a 1-acyl-2-hexanoyl-sn-glycero-3-phospho-(1D-myo-inositol) + phosphate. It carries out the reaction 1,2-dibutyryl-sn-glycero-3-phospho-(1D-myo-inositol-5-phosphate) + H2O = 1,2-dibutyryl-sn-glycero-3-phospho-(1D-myo-inositol) + phosphate. The protein operates within phospholipid metabolism; phosphatidylglycerol biosynthesis; phosphatidylglycerol from CDP-diacylglycerol: step 2/2. Functionally, lipid phosphatase which dephosphorylates phosphatidylglycerophosphate (PGP) to phosphatidylglycerol (PG). PGP is an essential intermediate in the biosynthetic pathway of cardiolipin, a mitochondrial-specific phospholipid regulating the membrane integrity and activities of the organelle. Has also been shown to display phosphatase activity toward phosphoprotein substrates, specifically mediates dephosphorylation of mitochondrial proteins, thereby playing an essential role in ATP production. Has probably a preference for proteins phosphorylated on Ser and/or Thr residues compared to proteins phosphorylated on Tyr residues. Probably involved in regulation of insulin secretion in pancreatic beta cells. May prevent intrinsic apoptosis, probably by regulating mitochondrial membrane integrity. The chain is Phosphatidylglycerophosphatase and protein-tyrosine phosphatase 1 from Rattus norvegicus (Rat).